The chain runs to 385 residues: Lipid-A-disaccharide synthase (385 aa).

This sequence belongs to the LpxB family.

It carries out the reaction a lipid X + a UDP-2-N,3-O-bis[(3R)-3-hydroxyacyl]-alpha-D-glucosamine = a lipid A disaccharide + UDP + H(+). It participates in bacterial outer membrane biogenesis; LPS lipid A biosynthesis. Its function is as follows. Condensation of UDP-2,3-diacylglucosamine and 2,3-diacylglucosamine-1-phosphate to form lipid A disaccharide, a precursor of lipid A, a phosphorylated glycolipid that anchors the lipopolysaccharide to the outer membrane of the cell. This is Lipid-A-disaccharide synthase from Xylella fastidiosa (strain M12).